We begin with the raw amino-acid sequence, 1061 residues long: Transcription termination factor 2 (1061 aa).

2 disordered regions span residues 1–163 (MSSE…TAEA) and 212–253 (ILSS…VKTS). Positions 32-46 (LSKSSRLSKSSRPSS) are enriched in low complexity. Phosphoserine occurs at positions 108 and 110. Positions 138–152 (LSDDDSEIEYSDEVQ) are enriched in acidic residues. 2 positions are modified to phosphoserine: Ser-214 and Ser-215. A Phosphothreonine modification is found at Thr-216. The segment covering 237–253 (KSLSPRSSAGASVVKTS) has biased composition (polar residues). Residues 452 to 652 (WRERKLPRGG…YALLKFLRCS (201 aa)) form the Helicase ATP-binding domain. Residue 465-472 (DDMGLGKT) participates in ATP binding. Positions 485–523 (GQEMSEGKDESSDSDSEDDKNKKRKSVTGWKSKGRKDTR) are disordered. Basic residues predominate over residues 506–522 (KKRKSVTGWKSKGRKDT). The short motif at 603 to 606 (DEAH) is the DEAH box element. In terms of domain architecture, Helicase C-terminal spans 891–1056 (KINMVIQILK…SSKLTIDDLK (166 aa)).

Belongs to the SNF2/RAD54 helicase family.

It localises to the nucleus. Functionally, dsDNA-dependent ATPase which acts as a transcription termination factor by coupling ATP hydrolysis with removal of RNA polymerase II from the DNA template. The sequence is that of Transcription termination factor 2 (lds) from Drosophila melanogaster (Fruit fly).